We begin with the raw amino-acid sequence, 70 residues long: Brevinin-1Vb (70 aa).

The first 22 residues, 1–22 (MFTLKKSLLLLFFLGTINLSLC), serve as a signal peptide directing secretion. Positions 23 to 44 (EEERNAEEERRDEPDEMNVEVE) are excised as a propeptide. The cysteines at positions 64 and 70 are disulfide-linked.

Expressed by the skin glands.

The protein resides in the secreted. Antimicrobial peptide. The polypeptide is Brevinin-1Vb (Odorrana versabilis (Chinese bamboo leaf odorous frog)).